A 226-amino-acid chain; its full sequence is 3-dehydroquinate dehydratase (226 aa).

3-dehydroquinate contacts are provided by residues 33-35 (ELR) and Arg65. The active-site Proton donor/acceptor is His120. Lys147 functions as the Schiff-base intermediate with substrate in the catalytic mechanism. Residues Arg186, Ser205, and Gln209 each coordinate 3-dehydroquinate.

Belongs to the type-I 3-dehydroquinase family. Homodimer.

The enzyme catalyses 3-dehydroquinate = 3-dehydroshikimate + H2O. It functions in the pathway metabolic intermediate biosynthesis; chorismate biosynthesis; chorismate from D-erythrose 4-phosphate and phosphoenolpyruvate: step 3/7. In terms of biological role, involved in the third step of the chorismate pathway, which leads to the biosynthesis of aromatic amino acids. Catalyzes the cis-dehydration of 3-dehydroquinate (DHQ) and introduces the first double bond of the aromatic ring to yield 3-dehydroshikimate. In Thermodesulfovibrio yellowstonii (strain ATCC 51303 / DSM 11347 / YP87), this protein is 3-dehydroquinate dehydratase.